The sequence spans 282 residues: Large ribosomal subunit protein uL2 (282 aa).

Disordered stretches follow at residues 31 to 56 and 226 to 282; these read EKSL…RHRG and SVMN…GSKM. The span at 35 to 44 shows a compositional bias: polar residues; sequence LDSQSHSAGR. Residues 257-266 are compositionally biased toward basic residues; the sequence is TVGKKTRSKK.

It belongs to the universal ribosomal protein uL2 family. Part of the 50S ribosomal subunit. Forms a bridge to the 30S subunit in the 70S ribosome.

Its function is as follows. One of the primary rRNA binding proteins. Required for association of the 30S and 50S subunits to form the 70S ribosome, for tRNA binding and peptide bond formation. It has been suggested to have peptidyltransferase activity; this is somewhat controversial. Makes several contacts with the 16S rRNA in the 70S ribosome. The sequence is that of Large ribosomal subunit protein uL2 from Levilactobacillus brevis (strain ATCC 367 / BCRC 12310 / CIP 105137 / JCM 1170 / LMG 11437 / NCIMB 947 / NCTC 947) (Lactobacillus brevis).